Consider the following 396-residue polypeptide: 8-amino-7-oxononanoate synthase (396 aa).

R31 contributes to the substrate binding site. Residue G118–Y119 participates in pyridoxal 5'-phosphate binding. Substrate is bound at residue H143. Residues S189, H217, and T245 each coordinate pyridoxal 5'-phosphate. K248 is subject to N6-(pyridoxal phosphate)lysine. Position 362 (T362) interacts with substrate.

This sequence belongs to the class-II pyridoxal-phosphate-dependent aminotransferase family. BioF subfamily. As to quaternary structure, homodimer. Requires pyridoxal 5'-phosphate as cofactor.

The catalysed reaction is 6-carboxyhexanoyl-[ACP] + L-alanine + H(+) = (8S)-8-amino-7-oxononanoate + holo-[ACP] + CO2. The protein operates within cofactor biosynthesis; biotin biosynthesis. In terms of biological role, catalyzes the decarboxylative condensation of pimeloyl-[acyl-carrier protein] and L-alanine to produce 8-amino-7-oxononanoate (AON), [acyl-carrier protein], and carbon dioxide. The protein is 8-amino-7-oxononanoate synthase of Methylobacillus flagellatus (strain ATCC 51484 / DSM 6875 / VKM B-1610 / KT).